The primary structure comprises 304 residues: Sulfate adenylyltransferase subunit 2 (304 aa).

The protein belongs to the PAPS reductase family. CysD subfamily. Heterodimer composed of CysD, the smaller subunit, and CysN.

The enzyme catalyses sulfate + ATP + H(+) = adenosine 5'-phosphosulfate + diphosphate. Its pathway is sulfur metabolism; hydrogen sulfide biosynthesis; sulfite from sulfate: step 1/3. With CysN forms the ATP sulfurylase (ATPS) that catalyzes the adenylation of sulfate producing adenosine 5'-phosphosulfate (APS) and diphosphate, the first enzymatic step in sulfur assimilation pathway. APS synthesis involves the formation of a high-energy phosphoric-sulfuric acid anhydride bond driven by GTP hydrolysis by CysN coupled to ATP hydrolysis by CysD. This is Sulfate adenylyltransferase subunit 2 from Acinetobacter baumannii (strain SDF).